The chain runs to 189 residues: Glutathione-dependent formaldehyde-activating enzyme (189 aa).

The region spanning 20–167 (FAGGTLVCKC…LKELGLEPYD (148 aa)) is the CENP-V/GFA domain. Zn(2+) contacts are provided by Cys-27, Cys-29, Cys-48, Cys-50, Cys-53, Cys-95, and Cys-98.

The protein belongs to the Gfa family. The cofactor is Zn(2+).

The enzyme catalyses S-(hydroxymethyl)glutathione = glutathione + formaldehyde. It participates in one-carbon metabolism; formaldehyde degradation; formate from formaldehyde (glutathione route): step 1/3. Functionally, catalyzes the condensation of formaldehyde and glutathione to S-hydroxymethylglutathione. The sequence is that of Glutathione-dependent formaldehyde-activating enzyme from Rhodopseudomonas palustris (strain BisA53).